Here is a 122-residue protein sequence, read N- to C-terminus: Hydrogenase maturation factor HypA (122 aa).

H2 lines the Ni(2+) pocket. Zn(2+)-binding residues include C73, C75, C95, and C98.

It belongs to the HypA/HybF family.

Its function is as follows. Involved in the maturation of [NiFe] hydrogenases. Required for nickel insertion into the metal center of the hydrogenase. The sequence is that of Hydrogenase maturation factor HypA from Methanothermobacter thermautotrophicus (strain ATCC 29096 / DSM 1053 / JCM 10044 / NBRC 100330 / Delta H) (Methanobacterium thermoautotrophicum).